Reading from the N-terminus, the 414-residue chain is FAD-dependent monooxygenase adaC (414 aa).

FAD-binding residues include Glu32, Ala43, Arg115, Asp325, and Gly338.

The protein belongs to the paxM FAD-dependent monooxygenase family. The cofactor is FAD.

The enzyme catalyses 3-(2,4-dioxopentyl)-3,6,8,9-tetrahydroxy-1-oxo-1,2,3,4-tetrahydroanthracene-2-carboxyl-[ACP] + NADPH + O2 + H(+) = 3-(2,4-dioxopentyl)-2,3,6,8,9-pentahydroxy-1-oxo-1,2,3,4-tetrahydroanthracene-2-carboxyl-[ACP] + NADP(+) + H2O. It functions in the pathway secondary metabolite biosynthesis. Functionally, FAD-dependent monooxygenase; part of the gene cluster that mediates the biosynthesis of the linear tetracyclic TAN-1612 neuropeptide Y receptor antagonist. The decaketide backbone of TAN-1612 is synthesized by the non-reducing polyketide synthase adaA via condensation of one acetyl-CoA starter unit with 9 malonyl-CoA units. The FAD-dependent monooxygenase adaC then performs hydroxylation at C2 while the polaketide chain is still attached to the NRPKS adaA. The alpha-hydroxylation step at C2 appears to be crucial for the following C18-C1 Claisen cyclization and release of the C9-hydroxyl version of TAN-1612 from the NRPKS adaA, two steps performed by the lactamase-like protein adaB. Finally, the O-methyltransferase adaD performs the C9 O-methylation to complete the biosynthesis of TAN-1612. This is FAD-dependent monooxygenase adaC from Aspergillus niger.